Here is a 320-residue protein sequence, read N- to C-terminus: Olfactory receptor 10J1 (320 aa).

The Extracellular segment spans residues 1–36; sequence MLLCFRFGNQSMKRENFTLITDFVFQGFSSFHEQQI. N-linked (GlcNAc...) asparagine glycans are attached at residues asparagine 9 and asparagine 16. The helical transmembrane segment at 37-57 threads the bilayer; sequence TLFGVFLALYILTLAGNIIIV. The Cytoplasmic segment spans residues 58–65; that stretch reads TIIRMDLH. A helical membrane pass occupies residues 66–86; the sequence is LHTPMYFFLSMLSTSETVYTL. Over 87–110 the chain is Extracellular; sequence VILPRMLSSLVGMSQPISLAGCAT. Cysteine 108 and cysteine 199 form a disulfide bridge. A helical membrane pass occupies residues 111 to 131; the sequence is QMFFFVTFGITNCFLLTAMGY. At 132–150 the chain is on the cytoplasmic side; the sequence is DRYVAICNPLRYMVIMNKR. Residues 151 to 171 traverse the membrane as a helical segment; it reads LRIQLVLGACSIGLIVAITQV. Residues 172-207 lie on the Extracellular side of the membrane; it reads TSVFRLPFCARKVPHFFCDIRPVMKLSCIDTTVNEI. A helical membrane pass occupies residues 208 to 227; that stretch reads LTLIISVLVLVVPMGLVFIS. At 228–247 the chain is on the cytoplasmic side; the sequence is YVLIISTILKIASVEGRKKA. A helical membrane pass occupies residues 248-268; that stretch reads FATCASHLTVVIVHYSCASIA. Over 269-281 the chain is Extracellular; it reads YLKPKSENTREHD. The helical transmembrane segment at 282-302 threads the bilayer; it reads QLISVTYTVITPLLNPVVYTL. The Cytoplasmic portion of the chain corresponds to 303 to 320; that stretch reads RNKEVKDALCRAVGGKFS.

This sequence belongs to the G-protein coupled receptor 1 family.

The protein resides in the cell membrane. Its function is as follows. Odorant receptor. The protein is Olfactory receptor 10J1 (OR10J1) of Homo sapiens (Human).